The primary structure comprises 382 residues: Lipid-A-disaccharide synthase (382 aa).

It belongs to the LpxB family.

It carries out the reaction 2-N,3-O-bis[(3R)-3-hydroxytetradecanoyl]-alpha-D-glucosaminyl 1-phosphate + UDP-2-N,3-O-bis[(3R)-3-hydroxytetradecanoyl]-alpha-D-glucosamine = lipid A disaccharide (E. coli) + UDP + H(+). It catalyses the reaction a lipid X + a UDP-2-N,3-O-bis[(3R)-3-hydroxyacyl]-alpha-D-glucosamine = a lipid A disaccharide + UDP + H(+). Its pathway is glycolipid biosynthesis; lipid IV(A) biosynthesis; lipid IV(A) from (3R)-3-hydroxytetradecanoyl-[acyl-carrier-protein] and UDP-N-acetyl-alpha-D-glucosamine: step 5/6. Functionally, condensation of UDP-2,3-diacylglucosamine and 2,3-diacylglucosamine-1-phosphate to form lipid A disaccharide, a precursor of lipid A, a phosphorylated glycolipid that anchors the lipopolysaccharide to the outer membrane of the cell. This Salmonella paratyphi B (strain ATCC BAA-1250 / SPB7) protein is Lipid-A-disaccharide synthase.